The chain runs to 126 residues: MNIPQELKYTKDHEWVKIDGDTVTIGVTDFAQGELGDIVYVEVETLDETLDKEEVFGTVEAVKTVSDLYMPVSGEIIEFNESLEDEPEKVNEDPYGEGWMIKIKLSDTSELEDLLSADEYKEVVGS.

One can recognise a Lipoyl-binding domain in the interval 22 to 104 (TVTIGVTDFA…YGEGWMIKIK (83 aa)). N6-lipoyllysine is present on lysine 63.

Belongs to the GcvH family. The glycine cleavage system is composed of four proteins: P, T, L and H. It depends on (R)-lipoate as a cofactor.

In terms of biological role, the glycine cleavage system catalyzes the degradation of glycine. The H protein shuttles the methylamine group of glycine from the P protein to the T protein. The sequence is that of Glycine cleavage system H protein from Christiangramia forsetii (strain DSM 17595 / CGMCC 1.15422 / KT0803) (Gramella forsetii).